The primary structure comprises 163 residues: Nucleotide-binding protein ESA_02876 (163 aa).

The protein belongs to the YajQ family.

Functionally, nucleotide-binding protein. This chain is Nucleotide-binding protein ESA_02876, found in Cronobacter sakazakii (strain ATCC BAA-894) (Enterobacter sakazakii).